Here is a 256-residue protein sequence, read N- to C-terminus: ATP synthase subunit a (256 aa).

The propeptide at 1 to 8 (MYQFNFIL) is removed in mature form. A run of 7 helical transmembrane segments spans residues 34–54 (ITNIGLYLSIGLLLTLGYHLL), 92–112 (YFPFIYALFIFILVNNLIGMV), 121–141 (HFILTFSMSFTIVLGATFLGL), 148–168 (FFSLFVPSGCPLGLLPLLVLI), 186–206 (ANILSGHMLLSILSGFTYNIM), 209–229 (GILFFFLGLIPLAFIIAFSGL), and 230–250 (ELAIAFIQAQVFVVLTCSYIK).

This sequence belongs to the ATPase A chain family. F-type ATPases have 2 components, CF(1) - the catalytic core - and CF(0) - the membrane proton channel. CF(1) has five subunits: alpha(3), beta(3), gamma(1), delta(1), epsilon(1). CF(0) has three main subunits: a, b and c.

It is found in the mitochondrion inner membrane. Functionally, mitochondrial membrane ATP synthase (F(1)F(0) ATP synthase or Complex V) produces ATP from ADP in the presence of a proton gradient across the membrane which is generated by electron transport complexes of the respiratory chain. F-type ATPases consist of two structural domains, F(1) - containing the extramembraneous catalytic core and F(0) - containing the membrane proton channel, linked together by a central stalk and a peripheral stalk. During catalysis, ATP synthesis in the catalytic domain of F(1) is coupled via a rotary mechanism of the central stalk subunits to proton translocation. Key component of the proton channel; it may play a direct role in the translocation of protons across the membrane. This Emericella nidulans (Aspergillus nidulans) protein is ATP synthase subunit a (atp6).